A 530-amino-acid chain; its full sequence is Bifunctional purine biosynthesis protein PurH (530 aa).

In terms of domain architecture, MGS-like spans 1-148; sequence MEQARPIRRA…KNHKDVAIVV (148 aa).

The protein belongs to the PurH family.

The catalysed reaction is (6R)-10-formyltetrahydrofolate + 5-amino-1-(5-phospho-beta-D-ribosyl)imidazole-4-carboxamide = 5-formamido-1-(5-phospho-D-ribosyl)imidazole-4-carboxamide + (6S)-5,6,7,8-tetrahydrofolate. It catalyses the reaction IMP + H2O = 5-formamido-1-(5-phospho-D-ribosyl)imidazole-4-carboxamide. Its pathway is purine metabolism; IMP biosynthesis via de novo pathway; 5-formamido-1-(5-phospho-D-ribosyl)imidazole-4-carboxamide from 5-amino-1-(5-phospho-D-ribosyl)imidazole-4-carboxamide (10-formyl THF route): step 1/1. The protein operates within purine metabolism; IMP biosynthesis via de novo pathway; IMP from 5-formamido-1-(5-phospho-D-ribosyl)imidazole-4-carboxamide: step 1/1. This is Bifunctional purine biosynthesis protein PurH from Aeromonas hydrophila subsp. hydrophila (strain ATCC 7966 / DSM 30187 / BCRC 13018 / CCUG 14551 / JCM 1027 / KCTC 2358 / NCIMB 9240 / NCTC 8049).